A 500-amino-acid polypeptide reads, in one-letter code: Transcription factor-like 5 protein (500 aa).

Pro residues-rich tracts occupy residues 1-12 and 196-210; these read MSGPGPREPPPE and AEPP…PPEP. 2 disordered regions span residues 1-34 and 191-211; these read MSGP…ALGE and FNSI…PEPG. The segment at 347–356 is R3 epitope (recognized by Chagas's antibodies); it reads MRQLDTNVER. The segment at 365-410 is disordered; that stretch reads VGEGATATQGAWQSSESSQANLGEQAQSGPQGGRSQRRERHNRMER. Residues 370-393 show a composition bias toward polar residues; it reads TATQGAWQSSESSQANLGEQAQSG. The bHLH domain maps to 400–450; sequence QRRERHNRMERDRRRRIRICCDELNLLVPFCNAETDKATTLQWTTAFLKYI. The segment at 481 to 500 is R1 epitope (recognized by Chagas's antibodies); that stretch reads SLVTCPAQGSLQSSPSMEIK.

In terms of assembly, efficient DNA binding requires dimerization with another bHLH protein. Isoform 3 is testis specific. Isoform 2 is pancreas specific.

Its subcellular location is the nucleus. Putative transcription factor. Isoform 3 may play a role in early spermatogenesis. The sequence is that of Transcription factor-like 5 protein (TCFL5) from Homo sapiens (Human).